The following is a 348-amino-acid chain: Holliday junction branch migration complex subunit RuvB (348 aa).

Residues 1–183 (MTEASRIVAP…FGIPVRLNFY (183 aa)) are large ATPase domain (RuvB-L). ATP contacts are provided by residues Leu22, Arg23, Gly64, Lys67, Thr68, Thr69, 130–132 (EDF), Arg173, Tyr183, and Arg220. Thr68 serves as a coordination point for Mg(2+). The tract at residues 184–254 (TEDELEKIVS…VADHALGALE (71 aa)) is small ATPAse domain (RuvB-S). Residues 257 to 348 (AAGLDAMDRR…SGLFGQDEDR (92 aa)) are head domain (RuvB-H). 3 residues coordinate DNA: Arg293, Arg312, and Arg317. The disordered stretch occupies residues 329-348 (LTEPSRDPAQSGLFGQDEDR).

This sequence belongs to the RuvB family. As to quaternary structure, homohexamer. Forms an RuvA(8)-RuvB(12)-Holliday junction (HJ) complex. HJ DNA is sandwiched between 2 RuvA tetramers; dsDNA enters through RuvA and exits via RuvB. An RuvB hexamer assembles on each DNA strand where it exits the tetramer. Each RuvB hexamer is contacted by two RuvA subunits (via domain III) on 2 adjacent RuvB subunits; this complex drives branch migration. In the full resolvosome a probable DNA-RuvA(4)-RuvB(12)-RuvC(2) complex forms which resolves the HJ.

The protein localises to the cytoplasm. The catalysed reaction is ATP + H2O = ADP + phosphate + H(+). Functionally, the RuvA-RuvB-RuvC complex processes Holliday junction (HJ) DNA during genetic recombination and DNA repair, while the RuvA-RuvB complex plays an important role in the rescue of blocked DNA replication forks via replication fork reversal (RFR). RuvA specifically binds to HJ cruciform DNA, conferring on it an open structure. The RuvB hexamer acts as an ATP-dependent pump, pulling dsDNA into and through the RuvAB complex. RuvB forms 2 homohexamers on either side of HJ DNA bound by 1 or 2 RuvA tetramers; 4 subunits per hexamer contact DNA at a time. Coordinated motions by a converter formed by DNA-disengaged RuvB subunits stimulates ATP hydrolysis and nucleotide exchange. Immobilization of the converter enables RuvB to convert the ATP-contained energy into a lever motion, pulling 2 nucleotides of DNA out of the RuvA tetramer per ATP hydrolyzed, thus driving DNA branch migration. The RuvB motors rotate together with the DNA substrate, which together with the progressing nucleotide cycle form the mechanistic basis for DNA recombination by continuous HJ branch migration. Branch migration allows RuvC to scan DNA until it finds its consensus sequence, where it cleaves and resolves cruciform DNA. In Nitrobacter winogradskyi (strain ATCC 25391 / DSM 10237 / CIP 104748 / NCIMB 11846 / Nb-255), this protein is Holliday junction branch migration complex subunit RuvB.